The sequence spans 114 residues: Fluoride-specific ion channel FluC 1 (114 aa).

A run of 4 helical transmembrane segments spans residues 3–23, 30–50, 55–75, and 87–107; these read IDIK…GALF, IFIV…LNIL, LTLC…MSHL, and FLLN…LGHI. Residues G63 and T66 each coordinate Na(+).

Belongs to the fluoride channel Fluc/FEX (TC 1.A.43) family.

The protein localises to the cell inner membrane. The catalysed reaction is fluoride(in) = fluoride(out). With respect to regulation, na(+) is not transported, but it plays an essential structural role and its presence is essential for fluoride channel function. In terms of biological role, fluoride-specific ion channel. Important for reducing fluoride concentration in the cell, thus reducing its toxicity. The chain is Fluoride-specific ion channel FluC 1 from Prochlorococcus marinus (strain NATL2A).